We begin with the raw amino-acid sequence, 259 residues long: Secretion system apparatus protein SsaT (259 aa).

6 helical membrane-spanning segments follow: residues 9–29, 35–55, 78–98, 127–147, 185–205, and 214–234; these read LIAL…LPLL, GAAL…LPII, VIIG…VDMA, LLFS…EFIL, ISFS…LGLL, and VFFF…LISF.

This sequence belongs to the FliR/MopE/SpaR family.

Its subcellular location is the cell membrane. Part of a type III secretion system. This is Secretion system apparatus protein SsaT (ssaT) from Salmonella typhimurium (strain LT2 / SGSC1412 / ATCC 700720).